The following is a 340-amino-acid chain: DNA repair protein RAD51 homolog A (340 aa).

Residues 1–14 (MSSAAQQQQKAAAA) show a composition bias toward low complexity. Residues 1-21 (MSSAAQQQQKAAAAEQEEVEH) form a disordered region. Positions 49–78 (TVEAVAYTPRKDLLQIKGISEAKADKIIEA) constitute a HhH domain. 128 to 135 (GEFRSGKT) lines the ATP pocket.

This sequence belongs to the RecA family. RAD51 subfamily. As to quaternary structure, self-associates and may interact with XRCC3 homolog. As to expression, highly expressed in mitotic and meiotic tissues, but low levels in differentiated tissues.

It localises to the nucleus. Functionally, binds to single and double-stranded DNA and exhibits DNA-dependent ATPase activity. Unwinds duplex DNA. Component of the meiotic recombination pathway. Seems to play a role in mediating chromosome homology search, chromosome pairing and synapsis at early stages and probably chromosome crossing-over at later stages in meiosis. Probably is involved in the repair of meiotic double strand breaks (DBSs) and in homologous recombination. In Zea mays (Maize), this protein is DNA repair protein RAD51 homolog A (RAD51A).